Reading from the N-terminus, the 164-residue chain is ATP synthase subunit b 2 (164 aa).

A helical transmembrane segment spans residues 4–24 (TFWAFVGLVLFLALLVYFEVP).

The protein belongs to the ATPase B chain family. In terms of assembly, F-type ATPases have 2 components, F(1) - the catalytic core - and F(0) - the membrane proton channel. F(1) has five subunits: alpha(3), beta(3), gamma(1), delta(1), epsilon(1). F(0) has three main subunits: a(1), b(2) and c(10-14). The alpha and beta chains form an alternating ring which encloses part of the gamma chain. F(1) is attached to F(0) by a central stalk formed by the gamma and epsilon chains, while a peripheral stalk is formed by the delta and b chains.

The protein localises to the cell inner membrane. In terms of biological role, f(1)F(0) ATP synthase produces ATP from ADP in the presence of a proton or sodium gradient. F-type ATPases consist of two structural domains, F(1) containing the extramembraneous catalytic core and F(0) containing the membrane proton channel, linked together by a central stalk and a peripheral stalk. During catalysis, ATP synthesis in the catalytic domain of F(1) is coupled via a rotary mechanism of the central stalk subunits to proton translocation. Component of the F(0) channel, it forms part of the peripheral stalk, linking F(1) to F(0). The chain is ATP synthase subunit b 2 from Bartonella henselae (strain ATCC 49882 / DSM 28221 / CCUG 30454 / Houston 1) (Rochalimaea henselae).